Reading from the N-terminus, the 620-residue chain is MAU2 chromatid cohesion factor homolog (620 aa).

TPR repeat units lie at residues 452–485 (GGFY…ANAE) and 492–525 (SCSL…ASKI).

Belongs to the SCC4/mau-2 family. Interacts with Nipped-B to form the cohesin loading complex.

The protein resides in the nucleus. The protein localises to the nucleoplasm. Required for association of the cohesin complex with chromatin during interphase. Plays a role in sister chromatid cohesion and normal progression through prometaphase. The sequence is that of MAU2 chromatid cohesion factor homolog from Drosophila persimilis (Fruit fly).